We begin with the raw amino-acid sequence, 213 residues long: Probable nicotinate-nucleotide adenylyltransferase (213 aa).

Belongs to the NadD family.

It carries out the reaction nicotinate beta-D-ribonucleotide + ATP + H(+) = deamido-NAD(+) + diphosphate. It functions in the pathway cofactor biosynthesis; NAD(+) biosynthesis; deamido-NAD(+) from nicotinate D-ribonucleotide: step 1/1. Functionally, catalyzes the reversible adenylation of nicotinate mononucleotide (NaMN) to nicotinic acid adenine dinucleotide (NaAD). This chain is Probable nicotinate-nucleotide adenylyltransferase, found in Escherichia coli O139:H28 (strain E24377A / ETEC).